The primary structure comprises 177 residues: Large ribosomal subunit protein uL6 (177 aa).

Residues 157–177 (YKGKGVRYAGEKVRRKEGKKK) are disordered.

This sequence belongs to the universal ribosomal protein uL6 family. As to quaternary structure, part of the 50S ribosomal subunit.

Its function is as follows. This protein binds to the 23S rRNA, and is important in its secondary structure. It is located near the subunit interface in the base of the L7/L12 stalk, and near the tRNA binding site of the peptidyltransferase center. This Caulobacter vibrioides (strain ATCC 19089 / CIP 103742 / CB 15) (Caulobacter crescentus) protein is Large ribosomal subunit protein uL6.